The primary structure comprises 349 residues: N-acetyl-gamma-glutamyl-phosphate reductase (349 aa).

Residue C149 is part of the active site.

It belongs to the NAGSA dehydrogenase family. Type 1 subfamily.

It is found in the cytoplasm. The catalysed reaction is N-acetyl-L-glutamate 5-semialdehyde + phosphate + NADP(+) = N-acetyl-L-glutamyl 5-phosphate + NADPH + H(+). The protein operates within amino-acid biosynthesis; L-arginine biosynthesis; N(2)-acetyl-L-ornithine from L-glutamate: step 3/4. Catalyzes the NADPH-dependent reduction of N-acetyl-5-glutamyl phosphate to yield N-acetyl-L-glutamate 5-semialdehyde. This Acinetobacter baylyi (strain ATCC 33305 / BD413 / ADP1) protein is N-acetyl-gamma-glutamyl-phosphate reductase.